The primary structure comprises 457 residues: UDP-glycosyltransferase 708C1 (457 aa).

UDP-alpha-D-glucose is bound at residue G31. The active-site Proton acceptor is H32. An anthocyanidin is bound at residue H32. T34 contributes to the UDP-alpha-D-glucose binding site. Residue N94 participates in an anthocyanidin binding. D129 acts as the Charge relay in catalysis. T150 lines the UDP-alpha-D-glucose pocket. Residues N279–R280 form a UDP region. The UDP-alpha-D-glucose site is built by V341, Q343, H358, W361, N362, S363, and E366. Position 381 (G381) interacts with an anthocyanidin. 2 residues coordinate UDP-alpha-D-glucose: D382 and Q383.

Belongs to the UDP-glycosyltransferase family. As to expression, expressed in cotyledons. Not detected in flowers, leaves, roots and hypocotyls.

It carries out the reaction a 3'-hydro-2'-hydroxy-beta-oxodihydrochalcone + UDP-alpha-D-glucose = a 3'-(beta-D-glucopyranosyl)-2'-hydroxy-beta-oxodihydrochalcone + UDP + H(+). In terms of biological role, UDP-glucose-dependent glucosyltransferase catalyzing the C-glucosylation of 2-hydroxyflavanones (2-hydroxynaringenin, 2-hydroxyeriodictyol and 2-hydroxypinocembrin) and phloretin. No activity with flavanones, flavones or flavonols. Exhibits C-glycosylation activity toward 2',4',6'-trihydroxyacetophenone and phloretin using UDP-glucose as sugar donor. Can use UDP-galactose as sugar donor, but catalytic efficiency is 14-fold lower toward UDP-galactose than toward UDP-glucose. In Fagopyrum esculentum (Common buckwheat), this protein is UDP-glycosyltransferase 708C1.